A 448-amino-acid polypeptide reads, in one-letter code: Potassium/proton antiporter CemA (448 aa).

Helical transmembrane passes span 224–244 (ALASIQYIGCLLFILSIISML), 325–345 (IILHLLTDIISIVTLIVLFII), 373–393 (ILLLTDLCIGFHSPHGWEIVI), and 408–428 (IISCFVSTFPVILDTVFKYWI).

The protein belongs to the CemA family.

It localises to the plastid. Its subcellular location is the chloroplast inner membrane. It catalyses the reaction K(+)(in) + H(+)(out) = K(+)(out) + H(+)(in). Contributes to K(+)/H(+) antiport activity by supporting proton efflux to control proton extrusion and homeostasis in chloroplasts in a light-dependent manner to modulate photosynthesis. Prevents excessive induction of non-photochemical quenching (NPQ) under continuous-light conditions. Indirectly promotes efficient inorganic carbon uptake into chloroplasts. This is Potassium/proton antiporter CemA from Angiopteris evecta (Mule's foot fern).